Reading from the N-terminus, the 800-residue chain is Isoamylase 2, chloroplastic (800 aa).

The span at 1-10 shows a compositional bias: pro residues; it reads MASLPAPPTP. The tract at residues 1-22 is disordered; sequence MASLPAPPTPLGSCPRGRGGGR. The transit peptide at 1–34 directs the protein to the chloroplast; that stretch reads MASLPAPPTPLGSCPRGRGGGRVVARPRRAGLAC.

This sequence belongs to the glycosyl hydrolase 13 family. Forms a hetero-hexamer composed of five ISA1 and one ISA2. As to expression, highly expressed in developing endosperm and leaves.

It is found in the plastid. It localises to the chloroplast. The enzyme catalyses Hydrolysis of (1-&gt;6)-alpha-D-glucosidic branch linkages in glycogen, amylopectin and their beta-limit dextrins.. Functionally, starch-debranching enzyme involved in amylopectin biosynthesis in endosperm. Functions by removing excess branches or improper branches that interfere with the formation of double helices of the cluster chains of amylopectin and crystallization of starch. Works together with ISA1 as heterooligomer. The heterooligomer ISA1 and ISA2 possesses higher affinity than the ISA1 homooligomer for various branched polyglucans in vitro, but no marked differences exist in chain preferences for debranching of amylopectin and phytoglycogen between these forms. In Oryza sativa subsp. japonica (Rice), this protein is Isoamylase 2, chloroplastic.